The chain runs to 338 residues: Lipoate-protein ligase A (338 aa).

Positions Pro-29–Val-216 constitute a BPL/LPL catalytic domain. ATP contacts are provided by residues Arg-71, Gly-76–Phe-79, and Lys-134. (R)-lipoate is bound at residue Lys-134.

This sequence belongs to the LplA family. In terms of assembly, monomer.

The protein localises to the cytoplasm. It catalyses the reaction L-lysyl-[lipoyl-carrier protein] + (R)-lipoate + ATP = N(6)-[(R)-lipoyl]-L-lysyl-[lipoyl-carrier protein] + AMP + diphosphate + H(+). The protein operates within protein modification; protein lipoylation via exogenous pathway; protein N(6)-(lipoyl)lysine from lipoate: step 1/2. It functions in the pathway protein modification; protein lipoylation via exogenous pathway; protein N(6)-(lipoyl)lysine from lipoate: step 2/2. Functionally, catalyzes both the ATP-dependent activation of exogenously supplied lipoate to lipoyl-AMP and the transfer of the activated lipoyl onto the lipoyl domains of lipoate-dependent enzymes. The protein is Lipoate-protein ligase A of Salmonella newport (strain SL254).